Here is a 151-residue protein sequence, read N- to C-terminus: IFN signaling evasion protein OPG029 (151 aa).

Belongs to the orthopoxvirus OPG029 family. In terms of assembly, interacts with host TANK, TBKBP1 and AZI2; these interactions prevent interferon production. Interacts with host STAT2.

In terms of biological role, prevents establishment of cellular antiviral state by blocking virus-induced phosphorylation and activation of interferon regulatory factors 3/IRF3 and 7/IRF7, transcription factors critical for the induction of interferons alpha and beta. This blockage is produced through the inhibition of host TBK1, by binding host TBK1 adapter proteins TBKBP1 and AZI2, thereby producing a strong inhibition of the phosphorylation and activation of IRF3 and IRF7. Also acts as an inhibitor of the cellular response to type I IFN by interacting with host STAT2. Mechanistically, exerts its inhibitory effect after host ISGF3 complex (composed of STAT1, STAT2 and IRF9) binding to the interferon stimulated response element (ISRE). This Vaccinia virus (strain Western Reserve) (VACV) protein is IFN signaling evasion protein OPG029 (OPG029).